Here is a 1465-residue protein sequence, read N- to C-terminus: DNA polymerase III PolC-type (1465 aa).

In terms of domain architecture, Exonuclease spans 427–583; it reads YVVFDVETTG…YDAEATGRLL (157 aa).

It belongs to the DNA polymerase type-C family. PolC subfamily.

The protein resides in the cytoplasm. The catalysed reaction is DNA(n) + a 2'-deoxyribonucleoside 5'-triphosphate = DNA(n+1) + diphosphate. Its function is as follows. Required for replicative DNA synthesis. This DNA polymerase also exhibits 3' to 5' exonuclease activity. This is DNA polymerase III PolC-type from Streptococcus pyogenes serotype M12 (strain MGAS2096).